A 189-amino-acid polypeptide reads, in one-letter code: UPF0301 protein PST_3956 (189 aa).

Belongs to the UPF0301 (AlgH) family.

The polypeptide is UPF0301 protein PST_3956 (Stutzerimonas stutzeri (strain A1501) (Pseudomonas stutzeri)).